The primary structure comprises 678 residues: uncharacterized protein (678 aa).

8 helical membrane-spanning segments follow: residues 228–250 (FFVI…FSFL), 263–285 (LAMW…VATQ), 300–322 (STGA…LSCV), 334–356 (MLHN…AVLF), 361–380 (FSLS…FFSA), 387–405 (RIML…YAYL), 420–439 (NVFF…TLFF), and 455–477 (NLLL…SVSL). The disordered stretch occupies residues 653–678 (PSSQGVHATPEKNACIRDETVPNLQE).

It localises to the cell membrane. This is an uncharacterized protein from Treponema pallidum (strain Nichols).